We begin with the raw amino-acid sequence, 68 residues long: Large ribosomal subunit protein uL29 (68 aa).

Belongs to the universal ribosomal protein uL29 family.

The protein is Large ribosomal subunit protein uL29 of Streptococcus gordonii (strain Challis / ATCC 35105 / BCRC 15272 / CH1 / DL1 / V288).